The following is a 920-amino-acid chain: 2-oxoglutarate dehydrogenase E1 component (920 aa).

It belongs to the alpha-ketoglutarate dehydrogenase family. Homodimer. Part of the 2-oxoglutarate dehydrogenase (OGDH) complex composed of E1 (2-oxoglutarate dehydrogenase), E2 (dihydrolipoamide succinyltransferase) and E3 (dihydrolipoamide dehydrogenase); the complex contains multiple copies of the three enzymatic components (E1, E2 and E3). The cofactor is thiamine diphosphate.

It carries out the reaction N(6)-[(R)-lipoyl]-L-lysyl-[protein] + 2-oxoglutarate + H(+) = N(6)-[(R)-S(8)-succinyldihydrolipoyl]-L-lysyl-[protein] + CO2. E1 component of the 2-oxoglutarate dehydrogenase (OGDH) complex which catalyzes the decarboxylation of 2-oxoglutarate, the first step in the conversion of 2-oxoglutarate to succinyl-CoA and CO(2). This Leptospira interrogans serogroup Icterohaemorrhagiae serovar copenhageni (strain Fiocruz L1-130) protein is 2-oxoglutarate dehydrogenase E1 component.